The primary structure comprises 209 residues: Thiamine-phosphate synthase (209 aa).

Residues 35–39 (QYRDK) and Asn-67 contribute to the 4-amino-2-methyl-5-(diphosphooxymethyl)pyrimidine site. The Mg(2+) site is built by Asp-68 and Asp-86. Thr-105 serves as a coordination point for 4-amino-2-methyl-5-(diphosphooxymethyl)pyrimidine. 132–134 (SNT) is a 2-[(2R,5Z)-2-carboxy-4-methylthiazol-5(2H)-ylidene]ethyl phosphate binding site. Lys-135 contributes to the 4-amino-2-methyl-5-(diphosphooxymethyl)pyrimidine binding site. 2-[(2R,5Z)-2-carboxy-4-methylthiazol-5(2H)-ylidene]ethyl phosphate is bound at residue Gly-162.

Belongs to the thiamine-phosphate synthase family. It depends on Mg(2+) as a cofactor.

It catalyses the reaction 2-[(2R,5Z)-2-carboxy-4-methylthiazol-5(2H)-ylidene]ethyl phosphate + 4-amino-2-methyl-5-(diphosphooxymethyl)pyrimidine + 2 H(+) = thiamine phosphate + CO2 + diphosphate. It carries out the reaction 2-(2-carboxy-4-methylthiazol-5-yl)ethyl phosphate + 4-amino-2-methyl-5-(diphosphooxymethyl)pyrimidine + 2 H(+) = thiamine phosphate + CO2 + diphosphate. The catalysed reaction is 4-methyl-5-(2-phosphooxyethyl)-thiazole + 4-amino-2-methyl-5-(diphosphooxymethyl)pyrimidine + H(+) = thiamine phosphate + diphosphate. The protein operates within cofactor biosynthesis; thiamine diphosphate biosynthesis; thiamine phosphate from 4-amino-2-methyl-5-diphosphomethylpyrimidine and 4-methyl-5-(2-phosphoethyl)-thiazole: step 1/1. In terms of biological role, condenses 4-methyl-5-(beta-hydroxyethyl)thiazole monophosphate (THZ-P) and 2-methyl-4-amino-5-hydroxymethyl pyrimidine pyrophosphate (HMP-PP) to form thiamine monophosphate (TMP). This Pseudomonas fluorescens (strain SBW25) protein is Thiamine-phosphate synthase.